The chain runs to 382 residues: Galactokinase (382 aa).

34–37 lines the substrate pocket; the sequence is EHTD. 124-130 is a binding site for ATP; it reads GAGLSSS. Residues serine 130 and glutamate 162 each contribute to the Mg(2+) site. Aspartate 174 serves as the catalytic Proton acceptor. Residue tyrosine 223 participates in substrate binding.

Belongs to the GHMP kinase family. GalK subfamily.

The protein resides in the cytoplasm. It carries out the reaction alpha-D-galactose + ATP = alpha-D-galactose 1-phosphate + ADP + H(+). It participates in carbohydrate metabolism; galactose metabolism. In terms of biological role, catalyzes the transfer of the gamma-phosphate of ATP to D-galactose to form alpha-D-galactose-1-phosphate (Gal-1-P). This Escherichia fergusonii (strain ATCC 35469 / DSM 13698 / CCUG 18766 / IAM 14443 / JCM 21226 / LMG 7866 / NBRC 102419 / NCTC 12128 / CDC 0568-73) protein is Galactokinase.